The chain runs to 563 residues: Lipase 1 (563 aa).

The N-terminal stretch at 1 to 19 is a signal peptide; sequence MVSKTFFLAAALNVVGTLA. The residue at position 20 (glutamine 20) is a Pyrrolidone carboxylic acid. An intrachain disulfide couples cysteine 80 to cysteine 124. Serine 236 (acyl-ester intermediate) is an active-site residue. An intrachain disulfide couples cysteine 295 to cysteine 307. Asparagine 302 carries N-linked (GlcNAc...) asparagine glycosylation. Glutamate 373 (charge relay system) is an active-site residue. Asparagine 383 is a glycosylation site (N-linked (GlcNAc...) asparagine). Catalysis depends on histidine 482, which acts as the Charge relay system.

The protein belongs to the type-B carboxylesterase/lipase family. Monomer.

It is found in the secreted. It catalyses the reaction a triacylglycerol + H2O = a diacylglycerol + a fatty acid + H(+). Hydrolyzes all ester bonds in triglyceride and displays a high affinity for triolein. For unsaturated substrates having long fatty acyl chains (C18:2 cis-9, cis-12 and C18:3 cis-9, cis-12, cis-15) GCL I shows higher specific activity than GCL II, whereas GCL II shows higher specific activity against saturated substrates having short fatty acid chains (C8, C10, C12 and C14). The chain is Lipase 1 (LIP1) from Geotrichum candidum (Oospora lactis).